Here is a 301-residue protein sequence, read N- to C-terminus: Envoplakin-like protein (301 aa).

A coiled-coil region spans residues 1 to 88 (MQASADQVER…ERVTQECAEY (88 aa)). Disordered stretches follow at residues 18–41 (RLQQDRLNSEQSQALQHQQETGSS) and 118–166 (GLRR…PEPI). Over residues 26–41 (SEQSQALQHQQETGSS) the composition is skewed to polar residues. Residues 136–151 (GAQHRAEGDQRPRRAA) are compositionally biased toward basic and acidic residues.

Belongs to the plakin or cytolinker family.

This Homo sapiens (Human) protein is Envoplakin-like protein (EVPLL).